We begin with the raw amino-acid sequence, 576 residues long: 3-hydroxy-3-methylglutaryl coenzyme A reductase 1 (576 aa).

The segment at 1-35 (MDSRRRPSKPLLTSSGEVLHRKQASPVTDEDQIHR) is disordered. The next 2 membrane-spanning stretches (helical) occupy residues 42-62 (ALPL…FSVA) and 89-109 (AIVS…IDFV). Catalysis depends on E255, which acts as the Charge relay system. N319 is a glycosylation site (N-linked (GlcNAc...) asparagine). Active-site charge relay system residues include K387 and D463. The helical transmembrane segment at 532 to 552 (LLATIVAGSVLAGELSLMSAI) threads the bilayer. H561 (proton donor) is an active-site residue. N-linked (GlcNAc...) asparagine glycosylation is present at N565.

Belongs to the HMG-CoA reductase family. Expressed in trichomes, leaves, flowers, roots and stems.

The protein localises to the endoplasmic reticulum membrane. The protein resides in the plastid. Its subcellular location is the chloroplast membrane. It is found in the peroxisome membrane. The enzyme catalyses (R)-mevalonate + 2 NADP(+) + CoA = (3S)-3-hydroxy-3-methylglutaryl-CoA + 2 NADPH + 2 H(+). It functions in the pathway metabolic intermediate biosynthesis; (R)-mevalonate biosynthesis; (R)-mevalonate from acetyl-CoA: step 3/3. Functionally, catalyzes the synthesis of mevalonate, the specific precursor of all isoprenoid compounds present in plants. Component of the triterpene saponins (e.g. ginsenosides or panaxosides) and phytosterols biosynthetic pathways. Promotes triterpenes accumulation in roots. This chain is 3-hydroxy-3-methylglutaryl coenzyme A reductase 1, found in Cannabis sativa (Hemp).